Here is a 525-residue protein sequence, read N- to C-terminus: Lysine--tRNA ligase (525 aa).

The 'HIGH' region motif lies at 40 to 48 (ASGIPHMGS). The short motif at 295-299 (KISKS) is the 'KMSKS' region element. Residue K298 coordinates ATP.

This sequence belongs to the class-I aminoacyl-tRNA synthetase family.

Its subcellular location is the cytoplasm. The enzyme catalyses tRNA(Lys) + L-lysine + ATP = L-lysyl-tRNA(Lys) + AMP + diphosphate. The polypeptide is Lysine--tRNA ligase (lysS) (Cenarchaeum symbiosum (strain A)).